A 102-amino-acid chain; its full sequence is Thioredoxin (102 aa).

Residues Met-1–Ala-102 form the Thioredoxin domain. Residues Cys-28 and Cys-31 are joined by a disulfide bond.

This sequence belongs to the thioredoxin family.

Functionally, participates in various redox reactions through the reversible oxidation of its active center dithiol to a disulfide and catalyzes dithiol-disulfide exchange reactions. The protein is Thioredoxin (trxA) of Chlamydia pneumoniae (Chlamydophila pneumoniae).